A 396-amino-acid chain; its full sequence is Elongation factor Tu 2 (396 aa).

A tr-type G domain is found at 10–206 (KPHVNIGTIG…AVDSYIPTPQ (197 aa)). A G1 region spans residues 19-26 (GHVDHGKT). A GTP-binding site is contributed by 19–26 (GHVDHGKT). T26 lines the Mg(2+) pocket. A G2 region spans residues 60–64 (GITIS). Positions 81 to 84 (DCPG) are G3. Residues 81–85 (DCPGH) and 136–139 (NKVD) each bind GTP. Residues 136-139 (NKVD) are G4. Positions 174–176 (SAL) are G5.

It belongs to the TRAFAC class translation factor GTPase superfamily. Classic translation factor GTPase family. EF-Tu/EF-1A subfamily. In terms of assembly, monomer.

Its subcellular location is the cytoplasm. It carries out the reaction GTP + H2O = GDP + phosphate + H(+). Its function is as follows. GTP hydrolase that promotes the GTP-dependent binding of aminoacyl-tRNA to the A-site of ribosomes during protein biosynthesis. This Myxococcus xanthus (strain DK1622) protein is Elongation factor Tu 2.